The chain runs to 591 residues: CDK5RAP3 protein homolog (591 aa).

Over residues 232–250 (RAGAPSSAKGPASSASAPP) the composition is skewed to low complexity. 2 disordered regions span residues 232–252 (RAGA…PPAL) and 269–303 (TAPP…DAGG). The segment covering 279 to 303 (AGAGASGQGGGIEIDWGDSGGDAGG) has biased composition (gly residues). 3 short sequence motifs (shuffled ATG8-binding motif) span residues 311-314 (IDWD), 334-337 (INWD), and 369-372 (IDWD). Residues 386–401 (NNRAGDVAEGEAAASL) are compositionally biased toward low complexity. A disordered region spans residues 386-416 (NNRAGDVAEGEAAASLSGGGGGGASSGDPDD).

It belongs to the CDK5RAP3 family. In terms of assembly, substrate adapter component of the UFM1 ribosome E3 ligase (UREL) complex. Interacts with ATG8 family proteins.

Substrate adapter of E3 ligase complexes mediating ufmylation, the covalent attachment of the ubiquitin-like modifier UFM1 to substrate proteins, and which is involved in various processes, such as ribosome recycling and reticulophagy (also called ER-phagy). The chain is CDK5RAP3 protein homolog from Chlamydomonas reinhardtii (Chlamydomonas smithii).